Reading from the N-terminus, the 305-residue chain is Diacylglycerol kinase (305 aa).

In terms of domain architecture, DAGKc spans 1–132 (MRKRARIIYN…VDIGKMNSRY (132 aa)). ATP is bound by residues 10–14 (NPTSG), T41, 67–73 (GDGTLNE), and T94. Mg(2+)-binding residues include K213, D216, and Y218. The active-site Proton acceptor is E273.

The protein belongs to the diacylglycerol/lipid kinase family. As to quaternary structure, homodimer. The cofactor is Mg(2+).

It carries out the reaction a 1,2-diacyl-sn-glycerol + ATP = a 1,2-diacyl-sn-glycero-3-phosphate + ADP + H(+). Catalyzes the phosphorylation of diacylglycerol (DAG) into phosphatidic acid. Is a key enzyme involved in the production of lipoteichoic acid by reintroducing DAG formed from the breakdown of membrane phospholipids into the phosphatidylglycerol biosynthetic pathway. In Staphylococcus saprophyticus subsp. saprophyticus (strain ATCC 15305 / DSM 20229 / NCIMB 8711 / NCTC 7292 / S-41), this protein is Diacylglycerol kinase (dagK).